The following is a 505-amino-acid chain: ATP synthase subunit alpha, chloroplastic (505 aa).

170-177 (GDRQTGKT) is a binding site for ATP.

Belongs to the ATPase alpha/beta chains family. As to quaternary structure, F-type ATPases have 2 components, CF(1) - the catalytic core - and CF(0) - the membrane proton channel. CF(1) has five subunits: alpha(3), beta(3), gamma(1), delta(1), epsilon(1). CF(0) has four main subunits: a, b, b' and c.

The protein resides in the plastid. It localises to the chloroplast thylakoid membrane. The catalysed reaction is ATP + H2O + 4 H(+)(in) = ADP + phosphate + 5 H(+)(out). Produces ATP from ADP in the presence of a proton gradient across the membrane. The alpha chain is a regulatory subunit. The sequence is that of ATP synthase subunit alpha, chloroplastic from Oenothera elata subsp. hookeri (Hooker's evening primrose).